Reading from the N-terminus, the 326-residue chain is Malate dehydrogenase (326 aa).

12 to 18 (GGTGQIA) contacts NAD(+). The substrate site is built by Arg93 and Arg99. NAD(+) is bound by residues Asn106, Gln113, and 130-132 (VGN). The substrate site is built by Asn132 and Arg163. His188 functions as the Proton acceptor in the catalytic mechanism.

Belongs to the LDH/MDH superfamily. MDH type 2 family.

It catalyses the reaction (S)-malate + NAD(+) = oxaloacetate + NADH + H(+). Catalyzes the reversible oxidation of malate to oxaloacetate. The sequence is that of Malate dehydrogenase from Chlamydia trachomatis serovar A (strain ATCC VR-571B / DSM 19440 / HAR-13).